A 226-amino-acid chain; its full sequence is Phosphoribosylformylglycinamidine synthase subunit PurQ (226 aa).

Positions 2–226 (KIAVVVFPGS…LENGRIKVEA (225 aa)) constitute a Glutamine amidotransferase type-1 domain. Cys86 functions as the Nucleophile in the catalytic mechanism. Catalysis depends on residues His195 and Glu197.

In terms of assembly, part of the FGAM synthase complex composed of 1 PurL, 1 PurQ and 2 PurS subunits.

Its subcellular location is the cytoplasm. It catalyses the reaction N(2)-formyl-N(1)-(5-phospho-beta-D-ribosyl)glycinamide + L-glutamine + ATP + H2O = 2-formamido-N(1)-(5-O-phospho-beta-D-ribosyl)acetamidine + L-glutamate + ADP + phosphate + H(+). The enzyme catalyses L-glutamine + H2O = L-glutamate + NH4(+). The protein operates within purine metabolism; IMP biosynthesis via de novo pathway; 5-amino-1-(5-phospho-D-ribosyl)imidazole from N(2)-formyl-N(1)-(5-phospho-D-ribosyl)glycinamide: step 1/2. Its function is as follows. Part of the phosphoribosylformylglycinamidine synthase complex involved in the purines biosynthetic pathway. Catalyzes the ATP-dependent conversion of formylglycinamide ribonucleotide (FGAR) and glutamine to yield formylglycinamidine ribonucleotide (FGAM) and glutamate. The FGAM synthase complex is composed of three subunits. PurQ produces an ammonia molecule by converting glutamine to glutamate. PurL transfers the ammonia molecule to FGAR to form FGAM in an ATP-dependent manner. PurS interacts with PurQ and PurL and is thought to assist in the transfer of the ammonia molecule from PurQ to PurL. This is Phosphoribosylformylglycinamidine synthase subunit PurQ from Limosilactobacillus reuteri (strain DSM 20016) (Lactobacillus reuteri).